Here is a 246-residue protein sequence, read N- to C-terminus: MIKVAVFGAKGRMGTAVCQAVEEAEDTELVAAVDSGGDRSDASGADVIVDFTTPDAVMDNLSWAISHDINTVVGTTGFDDERYQVLRDQLADHPNIGCLVAPNFSIGAVLMMHFAEQAARFYESAEIVELHHPNKVDAPSGTARTTATKIAAARQEAGLGEVPDATKSQLNGARGAVVEGVHVHSVRLRGLVAHQEVLFGAEGETLTIRHDSMDRVSFMSGVLTGVRGVLDRPGLTVGIEGLLGLE.

NAD(+) is bound by residues 8 to 13, 74 to 76, and 101 to 104; these read GAKGRM, GTT, and APNF. Histidine 131 functions as the Proton donor/acceptor in the catalytic mechanism. A (S)-2,3,4,5-tetrahydrodipicolinate-binding site is contributed by histidine 132. Catalysis depends on lysine 135, which acts as the Proton donor. 141–142 is a binding site for (S)-2,3,4,5-tetrahydrodipicolinate; the sequence is GT.

It belongs to the DapB family.

The protein resides in the cytoplasm. It carries out the reaction (S)-2,3,4,5-tetrahydrodipicolinate + NAD(+) + H2O = (2S,4S)-4-hydroxy-2,3,4,5-tetrahydrodipicolinate + NADH + H(+). The enzyme catalyses (S)-2,3,4,5-tetrahydrodipicolinate + NADP(+) + H2O = (2S,4S)-4-hydroxy-2,3,4,5-tetrahydrodipicolinate + NADPH + H(+). It participates in amino-acid biosynthesis; L-lysine biosynthesis via DAP pathway; (S)-tetrahydrodipicolinate from L-aspartate: step 4/4. Its function is as follows. Catalyzes the conversion of 4-hydroxy-tetrahydrodipicolinate (HTPA) to tetrahydrodipicolinate. The protein is 4-hydroxy-tetrahydrodipicolinate reductase of Cutibacterium acnes (strain DSM 16379 / KPA171202) (Propionibacterium acnes).